Consider the following 343-residue polypeptide: Small ribosomal subunit biogenesis GTPase RsgA (343 aa).

The CP-type G domain maps to 116–275; the sequence is RGQLKPVAAN…LIDSPGIREF (160 aa). Residues 163–166 and 217–225 contribute to the GTP site; these read NKAD and GQSGVGKSS. Residues cysteine 299, cysteine 304, histidine 306, and cysteine 312 each coordinate Zn(2+).

It belongs to the TRAFAC class YlqF/YawG GTPase family. RsgA subfamily. As to quaternary structure, monomer. Associates with 30S ribosomal subunit, binds 16S rRNA. Requires Zn(2+) as cofactor.

It is found in the cytoplasm. Functionally, one of several proteins that assist in the late maturation steps of the functional core of the 30S ribosomal subunit. Helps release RbfA from mature subunits. May play a role in the assembly of ribosomal proteins into the subunit. Circularly permuted GTPase that catalyzes slow GTP hydrolysis, GTPase activity is stimulated by the 30S ribosomal subunit. This chain is Small ribosomal subunit biogenesis GTPase RsgA, found in Pseudomonas fluorescens (strain ATCC BAA-477 / NRRL B-23932 / Pf-5).